Consider the following 698-residue polypeptide: Elongation factor G (698 aa).

One can recognise a tr-type G domain in the interval 11–291 (THFRNIGIAA…AVVDYLPSPL (281 aa)). Residues 20 to 27 (AHIDAGKT), 90 to 94 (DTPGH), and 144 to 147 (NKMD) each bind GTP.

The protein belongs to the TRAFAC class translation factor GTPase superfamily. Classic translation factor GTPase family. EF-G/EF-2 subfamily.

Its subcellular location is the cytoplasm. In terms of biological role, catalyzes the GTP-dependent ribosomal translocation step during translation elongation. During this step, the ribosome changes from the pre-translocational (PRE) to the post-translocational (POST) state as the newly formed A-site-bound peptidyl-tRNA and P-site-bound deacylated tRNA move to the P and E sites, respectively. Catalyzes the coordinated movement of the two tRNA molecules, the mRNA and conformational changes in the ribosome. In Deinococcus radiodurans (strain ATCC 13939 / DSM 20539 / JCM 16871 / CCUG 27074 / LMG 4051 / NBRC 15346 / NCIMB 9279 / VKM B-1422 / R1), this protein is Elongation factor G.